Here is a 452-residue protein sequence, read N- to C-terminus: GTPase Der (452 aa).

2 EngA-type G domains span residues 4-169 and 177-352; these read PVVA…PPAA and IKVA…ESHR. Residues 10 to 17, 57 to 61, 120 to 123, 183 to 190, 230 to 234, and 295 to 298 contribute to the GTP site; these read GRPNVGKS, DTGGL, NKCE, DTAGI, and NKWD. The KH-like domain occupies 353–438; the sequence is RRVSTSVIND…PIRLIWRGKP (86 aa).

It belongs to the TRAFAC class TrmE-Era-EngA-EngB-Septin-like GTPase superfamily. EngA (Der) GTPase family. Associates with the 50S ribosomal subunit.

Its function is as follows. GTPase that plays an essential role in the late steps of ribosome biogenesis. This is GTPase Der from Microcystis aeruginosa (strain NIES-843 / IAM M-2473).